Here is a 171-residue protein sequence, read N- to C-terminus: Putative antiporter subunit mnhG2 (171 aa).

3 consecutive transmembrane segments (helical) span residues 11–31, 51–71, and 72–92; these read IAAL…IGIV, VLLT…FFSV, and RLLL…HLVA. Positions 144 to 156 are enriched in basic and acidic residues; it reads DVQKQRQKEKQQE. Positions 144-171 are disordered; that stretch reads DVQKQRQKEKQQEENIESLSEARRETKD.

This sequence belongs to the CPA3 antiporters (TC 2.A.63) subunit G family. As to quaternary structure, may form a heterooligomeric complex that consists of seven subunits: mnhA2, mnhB2, mnhC2, mnhD2, mnhE2, mnhF2 and mnhG2.

It localises to the cell membrane. The protein is Putative antiporter subunit mnhG2 (mnhG2) of Staphylococcus haemolyticus (strain JCSC1435).